Reading from the N-terminus, the 253-residue chain is Protein phosphatase CheZ (253 aa).

The interval 1–84 is disordered; that stretch reads MTQEELDALM…EWPPPPPTEE (84 aa). The span at 21–69 shows a compositional bias: basic and acidic residues; that stretch reads LETKEETKEEAKEEAKEEAKEEAKEKEEIKEESSSQKMTVKKEDAEKYG.

The protein belongs to the CheZ family. In terms of assembly, interacts with ChePep; this interaction is essential for each other polar localization.

It is found in the cytoplasm. Functionally, plays an important role in bacterial chemotaxis signal transduction pathway by accelerating the dephosphorylation of phosphorylated CheY (CheY-P). Also dephosphorylates CheV2 but not CheV1 or CheV3. In addition, forms a distinct chemotaxis regulatory complex with ChePep independently of the core chemotaxis signaling proteins. This chain is Protein phosphatase CheZ, found in Helicobacter pylori (strain ATCC 700392 / 26695) (Campylobacter pylori).